The following is a 284-amino-acid chain: Ribosomal RNA small subunit methyltransferase A (284 aa).

The S-adenosyl-L-methionine site is built by N12, L14, G38, E59, D81, and N106.

The protein belongs to the class I-like SAM-binding methyltransferase superfamily. rRNA adenine N(6)-methyltransferase family. RsmA subfamily.

The protein resides in the cytoplasm. It carries out the reaction adenosine(1518)/adenosine(1519) in 16S rRNA + 4 S-adenosyl-L-methionine = N(6)-dimethyladenosine(1518)/N(6)-dimethyladenosine(1519) in 16S rRNA + 4 S-adenosyl-L-homocysteine + 4 H(+). Specifically dimethylates two adjacent adenosines (A1518 and A1519) in the loop of a conserved hairpin near the 3'-end of 16S rRNA in the 30S particle. May play a critical role in biogenesis of 30S subunits. This chain is Ribosomal RNA small subunit methyltransferase A, found in Phytoplasma australiense.